Consider the following 576-residue polypeptide: Proline--tRNA ligase (576 aa).

Belongs to the class-II aminoacyl-tRNA synthetase family. ProS type 1 subfamily. As to quaternary structure, homodimer.

Its subcellular location is the cytoplasm. It catalyses the reaction tRNA(Pro) + L-proline + ATP = L-prolyl-tRNA(Pro) + AMP + diphosphate. Its function is as follows. Catalyzes the attachment of proline to tRNA(Pro) in a two-step reaction: proline is first activated by ATP to form Pro-AMP and then transferred to the acceptor end of tRNA(Pro). As ProRS can inadvertently accommodate and process non-cognate amino acids such as alanine and cysteine, to avoid such errors it has two additional distinct editing activities against alanine. One activity is designated as 'pretransfer' editing and involves the tRNA(Pro)-independent hydrolysis of activated Ala-AMP. The other activity is designated 'posttransfer' editing and involves deacylation of mischarged Ala-tRNA(Pro). The misacylated Cys-tRNA(Pro) is not edited by ProRS. This Bordetella bronchiseptica (strain ATCC BAA-588 / NCTC 13252 / RB50) (Alcaligenes bronchisepticus) protein is Proline--tRNA ligase.